The chain runs to 255 residues: tRNA (guanine-N(7)-)-methyltransferase (255 aa).

Positions 86, 111, 138, and 161 each coordinate S-adenosyl-L-methionine. Aspartate 161 is a catalytic residue. Residues lysine 165, aspartate 197, and 234–237 (TKFE) each bind substrate.

The protein belongs to the class I-like SAM-binding methyltransferase superfamily. TrmB family.

The catalysed reaction is guanosine(46) in tRNA + S-adenosyl-L-methionine = N(7)-methylguanosine(46) in tRNA + S-adenosyl-L-homocysteine. It functions in the pathway tRNA modification; N(7)-methylguanine-tRNA biosynthesis. In terms of biological role, catalyzes the formation of N(7)-methylguanine at position 46 (m7G46) in tRNA. This chain is tRNA (guanine-N(7)-)-methyltransferase, found in Pasteurella multocida (strain Pm70).